The sequence spans 483 residues: Glutamate--tRNA ligase (483 aa).

Positions 14–24 (PSPTGDPHVGT) match the 'HIGH' region motif. The 'KMSKS' region motif lies at 253–257 (KISKR). Lys-256 lines the ATP pocket.

This sequence belongs to the class-I aminoacyl-tRNA synthetase family. Glutamate--tRNA ligase type 1 subfamily. As to quaternary structure, monomer.

The protein localises to the cytoplasm. It catalyses the reaction tRNA(Glu) + L-glutamate + ATP = L-glutamyl-tRNA(Glu) + AMP + diphosphate. Its function is as follows. Catalyzes the attachment of glutamate to tRNA(Glu) in a two-step reaction: glutamate is first activated by ATP to form Glu-AMP and then transferred to the acceptor end of tRNA(Glu). The sequence is that of Glutamate--tRNA ligase from Deinococcus radiodurans (strain ATCC 13939 / DSM 20539 / JCM 16871 / CCUG 27074 / LMG 4051 / NBRC 15346 / NCIMB 9279 / VKM B-1422 / R1).